A 444-amino-acid chain; its full sequence is Protein phosphatase 2C homolog C10F6.17c (444 aa).

The PPM-type phosphatase domain occupies 85 to 439 (RYDFNQVASN…DDITVTVIFF (355 aa)). Residues aspartate 121, glycine 122, and aspartate 344 each coordinate Mn(2+).

Belongs to the PP2C family. The cofactor is Mg(2+). Requires Mn(2+) as cofactor.

It localises to the mitochondrion. The enzyme catalyses O-phospho-L-seryl-[protein] + H2O = L-seryl-[protein] + phosphate. It catalyses the reaction O-phospho-L-threonyl-[protein] + H2O = L-threonyl-[protein] + phosphate. Functionally, involved in regulation of pyruvate dehydrogenase activity. The polypeptide is Protein phosphatase 2C homolog C10F6.17c (Schizosaccharomyces pombe (strain 972 / ATCC 24843) (Fission yeast)).